We begin with the raw amino-acid sequence, 547 residues long: Chaperonin GroEL (547 aa).

ATP-binding positions include 30–33 (TLGP), K51, 87–91 (DGTTT), G415, 479–481 (NAA), and D495. The disordered stretch occupies residues 526–547 (KEEKSDLSVPPQGGMGGMGGMM). Gly residues predominate over residues 538–547 (GGMGGMGGMM).

Belongs to the chaperonin (HSP60) family. Forms a cylinder of 14 subunits composed of two heptameric rings stacked back-to-back. Interacts with the co-chaperonin GroES.

The protein localises to the cytoplasm. It catalyses the reaction ATP + H2O + a folded polypeptide = ADP + phosphate + an unfolded polypeptide.. Together with its co-chaperonin GroES, plays an essential role in assisting protein folding. The GroEL-GroES system forms a nano-cage that allows encapsulation of the non-native substrate proteins and provides a physical environment optimized to promote and accelerate protein folding. The protein is Chaperonin GroEL of Buchnera aphidicola subsp. Tetraneura caerulescens.